Consider the following 88-residue polypeptide: Small ribosomal subunit protein bS16c (88 aa).

This sequence belongs to the bacterial ribosomal protein bS16 family.

Its subcellular location is the plastid. It is found in the chloroplast. The chain is Small ribosomal subunit protein bS16c from Jasminum nudiflorum (Winter jasmine).